Here is a 444-residue protein sequence, read N- to C-terminus: Proline--tRNA ligase (444 aa).

This sequence belongs to the class-II aminoacyl-tRNA synthetase family. ProS type 2 subfamily. As to quaternary structure, homodimer.

The protein localises to the cytoplasm. The catalysed reaction is tRNA(Pro) + L-proline + ATP = L-prolyl-tRNA(Pro) + AMP + diphosphate. Catalyzes the attachment of proline to tRNA(Pro) in a two-step reaction: proline is first activated by ATP to form Pro-AMP and then transferred to the acceptor end of tRNA(Pro). This chain is Proline--tRNA ligase, found in Bradyrhizobium sp. (strain BTAi1 / ATCC BAA-1182).